The primary structure comprises 537 residues: Sodium/hydrogen exchanger 9B2 (537 aa).

Residues 1–10 (MGDEDKRITY) are compositionally biased toward basic and acidic residues. The interval 1 to 33 (MGDEDKRITYEDSEPSTGMNYTPSMHQETQEET) is disordered. The Cytoplasmic segment spans residues 1 to 86 (MGDEDKRITY…ACPPHGLLDR (86 aa)). The span at 15–27 (PSTGMNYTPSMHQ) shows a compositional bias: polar residues. Serine 49 bears the Phosphoserine mark. Residues 87–104 (VVTNVTIIVLLWAVIWSI) traverse the membrane as a helical segment. The Extracellular portion of the chain corresponds to 105 to 113 (TGSECLPGG). A helical transmembrane segment spans residues 114–133 (NLFGIIILFYCAIIGGKLLG). At 134-144 (LIKLPTLPPLP) the chain is on the cytoplasmic side. Residues 145-161 (SLLGMLLAGFLIRNIPV) traverse the membrane as a helical segment. At 162–171 (INDNVQIKHK) the chain is on the extracellular side. Residues 172–189 (WSSSLRSIALSIILVRAG) form a helical membrane-spanning segment. Topologically, residues 190–200 (LGLDSKALKKL) are cytoplasmic. The chain crosses the membrane as a helical span at residues 201–227 (KGVCVRLSMGPCIVEACTSALLAHYLL). The Extracellular segment spans residues 228–233 (GLPWQW). Residues 234 to 242 (GFILGFVLG) traverse the membrane as a helical segment. Over 243–270 (AVSPAVVVPSMLLLQGGGYGVEKGVPTL) the chain is Cytoplasmic. The Na(+) site is built by valine 244, glycine 275, aspartate 278, and aspartate 279. A helical transmembrane segment spans residues 271–290 (LMAAGSFDDILAITGFNTCL). Topologically, residues 291–300 (GIAFSTGSTV) are extracellular. Residues 301-324 (FNVLRGVLEVVIGVATGSVLGFFI) form a helical membrane-spanning segment. The Cytoplasmic portion of the chain corresponds to 325 to 339 (QYFPSCDQDKLVCKR). The helical transmembrane segment at 340–357 (TFLVLGLSVLAVFSSVHF) threads the bilayer. Topologically, residues 358-361 (GFPG) are extracellular. A helical membrane pass occupies residues 362-373 (SGGLCTLVMAFL). At 374–390 (AGMGWTSEKAEVEKIIA) the chain is on the cytoplasmic side. Residues 391–411 (VAWDIFQPLLFGLIGAEVSIA) traverse the membrane as a helical segment. Over 412-417 (SLRPET) the chain is Extracellular. Residues 418–440 (VGLCVATVGIAVLIRILTTFLMV) form a helical membrane-spanning segment. Over 441 to 461 (CFAGFNLKEKIFISFAWLPKA) the chain is Cytoplasmic. A helical transmembrane segment spans residues 462 to 473 (TVQAAIGSVALD). The Extracellular segment spans residues 474 to 486 (TARSHGEKQLEDY). Residues 487 to 509 (GMDVLTVAFLSILITAPIGSLLI) traverse the membrane as a helical segment. At 510-537 (GLLGPRLLQKVEHQNKDEEVQGETSVQV) the chain is on the cytoplasmic side.

This sequence belongs to the monovalent cation:proton antiporter 1 (CPA1) transporter (TC 2.A.36) family. As to quaternary structure, homodimer; dimerization is essential for SLC9B2 activity. Lipids seem to play a role in the stabilization of the dimerization subdomain.

It is found in the cell membrane. It localises to the mitochondrion membrane. The protein localises to the endosome membrane. The protein resides in the recycling endosome membrane. Its subcellular location is the cytoplasmic vesicle. It is found in the secretory vesicle. It localises to the synaptic vesicle membrane. The protein localises to the basolateral cell membrane. The protein resides in the apical cell membrane. The enzyme catalyses Li(+)(out) + H(+)(in) = Li(+)(in) + H(+)(out). It carries out the reaction Li(+)(in) + Na(+)(out) = Li(+)(out) + Na(+)(in). It catalyses the reaction Na(+)(in) + H(+)(out) = Na(+)(out) + H(+)(in). Allosterically inhibited by the N-terminal domain. Inhibited by phloretin. Electroneutral Na(+) Li(+)/H(+) antiporter that extrudes Na(+) or Li(+) in exchange for external protons across the membrane. Uses the proton gradient/membrane potential to extrude sodium. Contributes to the regulation of intracellular pH and sodium homeostasis. Also able to mediate Na(+)/Li(+) antiporter activity in kidney. May play a physiological role in renal tubular function and blood pressure homeostasis. Plays an important role for insulin secretion and clathrin-mediated endocytosis in beta-cells. Involved in sperm motility and fertility. It is controversial whether SLC9B2 plays a role in osteoclast differentiation or not. The sequence is that of Sodium/hydrogen exchanger 9B2 (SLC9B2) from Pongo abelii (Sumatran orangutan).